The chain runs to 99 residues: MVEEEQPISVDYEVFGKVQGVFFRKYTQAEGNRLGLVGWVRNTDAGTVTGQLQGPSEKVREMQVWLQKKGSPKSRITKVQFQNERRLPKLEHSTFSICK.

One can recognise an Acylphosphatase-like domain in the interval 9–99 (SVDYEVFGKV…LEHSTFSICK (91 aa)). Active-site residues include R24 and N42.

It belongs to the acylphosphatase family.

The catalysed reaction is an acyl phosphate + H2O = a carboxylate + phosphate + H(+). The chain is Acylphosphatase-1 (acyp1) from Xenopus laevis (African clawed frog).